We begin with the raw amino-acid sequence, 66 residues long: Large ribosomal subunit protein bL33c (66 aa).

This sequence belongs to the bacterial ribosomal protein bL33 family.

The protein resides in the plastid. The protein localises to the chloroplast. In Populus alba (White poplar), this protein is Large ribosomal subunit protein bL33c.